We begin with the raw amino-acid sequence, 49 residues long: Osteocalcin (49 aa).

The Gla domain occupies 1-47; it reads YLDPGLGAPAPYPDPLEPKREVCELNPDCDELADHIGFQEAYRRFYG. P9 bears the Hydroxyproline mark. Positions 17, 21, 24, and 30 each coordinate Ca(2+). 4-carboxyglutamate occurs at positions 17, 21, and 24. C23 and C29 are oxidised to a cystine.

It belongs to the osteocalcin/matrix Gla protein family. In terms of processing, gamma-carboxyglutamate residues are formed by vitamin K dependent carboxylation by GGCX. These residues are essential for the binding of calcium. Decarboxylation promotes the hormone activity.

The protein localises to the secreted. Its function is as follows. The carboxylated form is one of the main organic components of the bone matrix, which constitutes 1-2% of the total bone protein. It acts as a negative regulator of bone formation and is required to limit bone formation without impairing bone resorption or mineralization. The carboxylated form binds strongly to apatite and calcium. In terms of biological role, the uncarboxylated form acts as a hormone secreted by osteoblasts, which regulates different cellular processes, such as energy metabolism, male fertility and brain development. Regulates of energy metabolism by acting as a hormone favoring pancreatic beta-cell proliferation, insulin secretion and sensitivity and energy expenditure. Uncarboxylated osteocalcin hormone also promotes testosterone production in the testes: acts as a ligand for G protein-coupled receptor GPRC6A at the surface of Leydig cells, initiating a signaling response that promotes the expression of enzymes required for testosterone synthesis in a CREB-dependent manner. Also acts as a regulator of brain development: osteocalcin hormone crosses the blood-brain barrier and acts as a ligand for GPR158 on neurons, initiating a signaling response that prevents neuronal apoptosis in the hippocampus, favors the synthesis of all monoamine neurotransmitters and inhibits that of gamma-aminobutyric acid (GABA). Osteocalcin also crosses the placenta during pregnancy and maternal osteocalcin is required for fetal brain development. This chain is Osteocalcin (BGLAP), found in Capra hircus (Goat).